The following is a 554-amino-acid chain: 3-(3-hydroxy-phenyl)propionate/3-hydroxycinnamic acid hydroxylase (554 aa).

Residues Gln17 to Lys46 and Phe285 to Asp295 each bind FAD.

Belongs to the PheA/TfdB FAD monooxygenase family. It depends on FAD as a cofactor.

The catalysed reaction is 3-(3-hydroxyphenyl)propanoate + NADH + O2 + H(+) = 3-(2,3-dihydroxyphenyl)propanoate + NAD(+) + H2O. It catalyses the reaction (2E)-3-(3-hydroxyphenyl)prop-2-enoate + NADH + O2 + H(+) = (2E)-3-(2,3-dihydroxyphenyl)prop-2-enoate + NAD(+) + H2O. The protein operates within aromatic compound metabolism; 3-phenylpropanoate degradation. Functionally, catalyzes the insertion of one atom of molecular oxygen into position 2 of the phenyl ring of 3-(3-hydroxyphenyl)propionate (3-HPP) and hydroxycinnamic acid (3HCI). This chain is 3-(3-hydroxy-phenyl)propionate/3-hydroxycinnamic acid hydroxylase, found in Escherichia coli O17:K52:H18 (strain UMN026 / ExPEC).